The primary structure comprises 121 residues: Large ribosomal subunit protein uL14c (121 aa).

The protein belongs to the universal ribosomal protein uL14 family. In terms of assembly, part of the 50S ribosomal subunit.

The protein resides in the plastid. Its subcellular location is the apicoplast. Functionally, binds to 23S rRNA. In Toxoplasma gondii, this protein is Large ribosomal subunit protein uL14c (rpl14).